A 353-amino-acid polypeptide reads, in one-letter code: Photosystem II protein D1 (353 aa).

Threonine 2 bears the N-acetylthreonine mark. A Phosphothreonine modification is found at threonine 2. 3 consecutive transmembrane segments (helical) span residues tyrosine 29–serine 46, histidine 118–leucine 133, and tryptophan 142–alanine 156. A chlorophyll a-binding site is contributed by histidine 118. A pheophytin a-binding site is contributed by tyrosine 126. Aspartate 170 and glutamate 189 together coordinate [CaMn4O5] cluster. Residues phenylalanine 197–leucine 218 traverse the membrane as a helical segment. A chlorophyll a-binding site is contributed by histidine 198. A quinone contacts are provided by residues histidine 215 and serine 264–phenylalanine 265. Histidine 215 provides a ligand contact to Fe cation. Position 272 (histidine 272) interacts with Fe cation. The chain crosses the membrane as a helical span at residues phenylalanine 274–leucine 288. Residues histidine 332, glutamate 333, aspartate 342, and alanine 344 each contribute to the [CaMn4O5] cluster site. Residues alanine 345 to glycine 353 constitute a propeptide that is removed on maturation.

The protein belongs to the reaction center PufL/M/PsbA/D family. PSII is composed of 1 copy each of membrane proteins PsbA, PsbB, PsbC, PsbD, PsbE, PsbF, PsbH, PsbI, PsbJ, PsbK, PsbL, PsbM, PsbT, PsbX, PsbY, PsbZ, Psb30/Ycf12, at least 3 peripheral proteins of the oxygen-evolving complex and a large number of cofactors. It forms dimeric complexes. The D1/D2 heterodimer binds P680, chlorophylls that are the primary electron donor of PSII, and subsequent electron acceptors. It shares a non-heme iron and each subunit binds pheophytin, quinone, additional chlorophylls, carotenoids and lipids. D1 provides most of the ligands for the Mn4-Ca-O5 cluster of the oxygen-evolving complex (OEC). There is also a Cl(-1) ion associated with D1 and D2, which is required for oxygen evolution. The PSII complex binds additional chlorophylls, carotenoids and specific lipids. serves as cofactor. Post-translationally, tyr-161 forms a radical intermediate that is referred to as redox-active TyrZ, YZ or Y-Z. In terms of processing, C-terminally processed by CTPA; processing is essential to allow assembly of the oxygen-evolving complex and thus photosynthetic growth.

It localises to the plastid. The protein localises to the chloroplast thylakoid membrane. The catalysed reaction is 2 a plastoquinone + 4 hnu + 2 H2O = 2 a plastoquinol + O2. Photosystem II (PSII) is a light-driven water:plastoquinone oxidoreductase that uses light energy to abstract electrons from H(2)O, generating O(2) and a proton gradient subsequently used for ATP formation. It consists of a core antenna complex that captures photons, and an electron transfer chain that converts photonic excitation into a charge separation. The D1/D2 (PsbA/PsbD) reaction center heterodimer binds P680, the primary electron donor of PSII as well as several subsequent electron acceptors. In Phaseolus vulgaris (Kidney bean), this protein is Photosystem II protein D1.